The following is a 102-amino-acid chain: Large ribosomal subunit protein uL24 (102 aa).

Belongs to the universal ribosomal protein uL24 family. As to quaternary structure, part of the 50S ribosomal subunit.

Its function is as follows. One of two assembly initiator proteins, it binds directly to the 5'-end of the 23S rRNA, where it nucleates assembly of the 50S subunit. One of the proteins that surrounds the polypeptide exit tunnel on the outside of the subunit. The protein is Large ribosomal subunit protein uL24 of Herpetosiphon aurantiacus (strain ATCC 23779 / DSM 785 / 114-95).